Reading from the N-terminus, the 85-residue chain is UPF0297 protein LBUL_1485 (85 aa).

The protein belongs to the UPF0297 family.

The polypeptide is UPF0297 protein LBUL_1485 (Lactobacillus delbrueckii subsp. bulgaricus (strain ATCC BAA-365 / Lb-18)).